The following is a 1104-amino-acid chain: Reverse gyrase (1104 aa).

The RG N-terminal-type zinc finger occupies 1 to 39 (MAVNSKYHHSCINCGGLNTDERNERGLPCEVCLPEDSPS). Positions 11, 14, 29, and 32 each coordinate Zn(2+). ADP-binding residues include F75, D78, Q83, G103, G105, K106, T107, and T108. Residues Q83 and 100-107 (APTGVGKT) each bind ATP. One can recognise a Helicase ATP-binding domain in the interval 87–242 (AKRIVQGKSF…FSTIKQGKIY (156 aa)). A DEAD box motif is present at residues 203–206 (DDVD). Positions 223-250 (GIPEEIIRKAFSTIKQGKIYERPKNLKP) are insert region. The Helicase C-terminal domain occupies 300–522 (KLVELLEIFR…EAEANWKELV (223 aa)). Residues 390–460 (RFSLELDKAP…KDEDLELIIP (71 aa)) form a latch region region. The segment at 538-1104 (DTSRSLLIIV…EEIKSLMEEG (567 aa)) is topoisomerase I. One can recognise a Toprim domain in the interval 542–699 (SLLIIVESPT…SLRRIEMHEI (158 aa)). E548 contacts Mg(2+). The RG C-terminal-type zinc finger occupies 618 to 645 (LKRCRDCGYQFTEDRDECPVCSSKNIDD). Residues C621, C624, C635, and C638 each contribute to the Zn(2+) site. Residue D668 participates in Mg(2+) binding. The Topo IA-type catalytic domain maps to 715 to 1101 (DFNLVKAQIV…LLYEEIKSLM (387 aa)). Y851 serves as the catalytic O-(5'-phospho-DNA)-tyrosine intermediate.

The protein in the N-terminal section; belongs to the DEAD box helicase family. DDVD subfamily. In the C-terminal section; belongs to the type IA topoisomerase family. Monomer. Requires Zn(2+) as cofactor. It depends on Mg(2+) as a cofactor.

The protein resides in the cytoplasm. It carries out the reaction ATP + H2O = ADP + phosphate + H(+). Its function is as follows. Modifies the topological state of DNA by introducing positive supercoils in an ATP-dependent process. Increases the linking number in steps of +1. Probably recognizes regions with a low GC content which melt and form a ssDNA bubble, allowing the enzyme to bind and cleave the DNA prior to strand passage; the bubble is probably cleaved by 2 reverse gyrase molecules, one on each strand. Positively supercoils DNA with all NTPS, although it strongly prefers ATP. In the presence of non-hydrolyzable ATP analogs it partially relaxes negative supercoils. Has an intrinsic ATPase activity that is stimulated by DNA; ssDNA is most effective. Binds to single-stranded DNA, transiently cleaves and then rejoins the ends, introducing a positive supercoil in the process. The scissile phosphodiester is attacked by the catalytic tyrosine of the enzyme, resulting in the formation of a DNA-(5'-phosphotyrosyl)-enzyme intermediate. The helicase-like domain is a nucleotide-dependent switch that alternates between a physically closed ATP-bound state with a slight preference for dsDNA, and an open ADP-bound state with a high preference for ssDNA. Whole enzyme has a very poor (k-unwind=0.001 sec(-1)) non-processive helicase activity in the 3'-5' direction that works on short substrates, while the isolated helicase domain has a slightly better helicase activity that works in both directions. Probably involved in rewinding DNA strands in regions of the chromosome that have opened up to allow replication, transcription, DNA repair and/or for DNA protection. The protein is Reverse gyrase of Thermotoga maritima (strain ATCC 43589 / DSM 3109 / JCM 10099 / NBRC 100826 / MSB8).